The chain runs to 366 residues: Growth hormone secretagogue receptor type 1 (366 aa).

The Extracellular segment spans residues 1–40; it reads MWNATPSEEPGFNLTLADLDWDASPGNDSLGDELLQLFPA. 2 N-linked (GlcNAc...) asparagine glycosylation sites follow: Asn13 and Asn27. The chain crosses the membrane as a helical span at residues 41-66; it reads PLLAGVTATCVALFVVGIAGNLLTML. Residues 67-72 lie on the Cytoplasmic side of the membrane; sequence VVSRFR. The chain crosses the membrane as a helical span at residues 73-96; that stretch reads ELRTTTNLYLSSMAFSDLLIFLCM. Residues 97 to 117 are Extracellular-facing; that stretch reads PLDLVRLWQYRPWNFGDLLCK. Cys116 and Cys198 are disulfide-bonded. The helical transmembrane segment at 118-139 threads the bilayer; that stretch reads LFQFVSESCTYATVLTITALSV. The Cytoplasmic portion of the chain corresponds to 140–162; sequence ERYFAICFPLRAKVVVTKGRVKL. The chain crosses the membrane as a helical span at residues 163-183; that stretch reads VIFVIWAVAFCSAGPIFVLVG. The Extracellular portion of the chain corresponds to 184–211; it reads VEHENGTDPWDTNECRPTEFAVRSGLLT. Residues 212 to 235 form a helical membrane-spanning segment; sequence VMVWVSSIFFFLPVFCLTVLYSLI. Residues 236–263 lie on the Cytoplasmic side of the membrane; the sequence is GRKLWRRRRGDAVVGASLRDQNHKQTVK. The chain crosses the membrane as a helical span at residues 264–285; sequence MLAVVVFAFILCWLPFHVGRYL. The Extracellular segment spans residues 286–302; the sequence is FSKSFEPGSLEIAQISQ. Residues 303–326 traverse the membrane as a helical segment; the sequence is YCNLVSFVLFYLSAAINPILYNIM. At 327–366 the chain is on the cytoplasmic side; that stretch reads SKKYRVAVFRLLGFEPFSQRKLSTLKDESSRAWTESSINT.

It belongs to the G-protein coupled receptor 1 family. As to expression, pituitary and hypothalamus.

Its subcellular location is the cell membrane. Receptor for ghrelin, coupled to G-alpha-11 proteins. Stimulates growth hormone secretion. Also binds other growth hormone releasing peptides (GHRP) (e.g. Met-enkephalin and GHRP-6) as well as non-peptide, low molecular weight secretagogues (e.g. L-692,429, MK-0677, adenosine). This Homo sapiens (Human) protein is Growth hormone secretagogue receptor type 1 (GHSR).